A 114-amino-acid polypeptide reads, in one-letter code: Hydrogenase maturation factor HypA (114 aa).

A Ni(2+)-binding site is contributed by His2. Zn(2+)-binding residues include Cys70, Cys73, Cys86, and Cys89.

It belongs to the HypA/HybF family.

In terms of biological role, involved in the maturation of [NiFe] hydrogenases. Required for nickel insertion into the metal center of the hydrogenase. The sequence is that of Hydrogenase maturation factor HypA from Trichodesmium erythraeum (strain IMS101).